The primary structure comprises 421 residues: Gamma-glutamyl phosphate reductase (421 aa).

It belongs to the gamma-glutamyl phosphate reductase family.

It localises to the cytoplasm. It catalyses the reaction L-glutamate 5-semialdehyde + phosphate + NADP(+) = L-glutamyl 5-phosphate + NADPH + H(+). Its pathway is amino-acid biosynthesis; L-proline biosynthesis; L-glutamate 5-semialdehyde from L-glutamate: step 2/2. Its function is as follows. Catalyzes the NADPH-dependent reduction of L-glutamate 5-phosphate into L-glutamate 5-semialdehyde and phosphate. The product spontaneously undergoes cyclization to form 1-pyrroline-5-carboxylate. This chain is Gamma-glutamyl phosphate reductase, found in Pseudomonas aeruginosa (strain ATCC 15692 / DSM 22644 / CIP 104116 / JCM 14847 / LMG 12228 / 1C / PRS 101 / PAO1).